The sequence spans 87 residues: UPF0250 protein YbeD (87 aa).

This sequence belongs to the UPF0250 family.

The chain is UPF0250 protein YbeD from Shigella boydii serotype 18 (strain CDC 3083-94 / BS512).